The following is a 115-amino-acid chain: Protein VCF2 (115 aa).

Residues 1–12 are compositionally biased toward basic residues; the sequence is MGGCPVRKRRRN. A disordered region spans residues 1–70; the sequence is MGGCPVRKRR…GPEGNLNQIV (70 aa). Residues 33–44 are compositionally biased toward polar residues; sequence FQDSQDTEFSWS.

It belongs to the VCF family.

The polypeptide is Protein VCF2 (Homo sapiens (Human)).